Reading from the N-terminus, the 108-residue chain is FK506-binding protein 1A (108 aa).

Residues 1–20 (MGVEVQRISPGDGKNFPKPG) are disordered. The PPIase FKBP-type domain occupies 20–108 (GDTVSIHYTG…TFEVELLKIN (89 aa)).

It belongs to the FKBP-type PPIase family. FKBP1 subfamily.

It is found in the cytoplasm. The enzyme catalyses [protein]-peptidylproline (omega=180) = [protein]-peptidylproline (omega=0). With respect to regulation, inhibited by both FK506 and rapamycin. Functionally, PPIases accelerate the folding of proteins. It catalyzes the cis-trans isomerization of proline imidic peptide bonds in oligopeptides. This Emericella nidulans (strain FGSC A4 / ATCC 38163 / CBS 112.46 / NRRL 194 / M139) (Aspergillus nidulans) protein is FK506-binding protein 1A (fprA).